The primary structure comprises 288 residues: Phospholipid phosphatase 2 (288 aa).

Over 1 to 4 the chain is Cytoplasmic; sequence MQRR. The helical transmembrane segment at 5–25 threads the bilayer; it reads WVFVLLDVLCLLVASLPFAIL. Over 26 to 51 the chain is Lumenal; it reads TLVNAPYKRGFYCGDDSIRYPYRPDT. A helical transmembrane segment spans residues 52-72; it reads ITHGLMAGVTITATVILVSAG. At 73–87 the chain is on the cytoplasmic side; it reads EAYLVYTDRLYSRSD. Residues 88 to 108 traverse the membrane as a helical segment; sequence FNNYVAAVYKVLGTFLFGAAV. At 109–162 the chain is on the lumenal side; the sequence is SQSLTDLAKYMIGRLRPNFLAVCDPDWSRVNCSVYVQLEKVCRGNPADVTEARL. Residues 117–125 are phosphatase sequence motif I; the sequence is KYMIGRLRP. N-linked (GlcNAc...) asparagine glycosylation occurs at asparagine 139. The helical transmembrane segment at 163–183 threads the bilayer; it reads SFYSGHSSFGMYCMVFLALYV. The phosphatase sequence motif II stretch occupies residues 165–168; that stretch reads YSGH. Residue histidine 168 is the Proton donors of the active site. The Cytoplasmic portion of the chain corresponds to 184–196; the sequence is QARLCWKWARLLR. Residues 197-217 form a helical membrane-spanning segment; it reads PTVQFFLVAFALYVGYTRVSD. The interval 213 to 224 is phosphatase sequence motif III; that stretch reads TRVSDYKHHWSD. Residues 218–226 are Lumenal-facing; that stretch reads YKHHWSDVL. The active-site Nucleophile is histidine 220. The chain crosses the membrane as a helical span at residues 227–247; that stretch reads VGLLQGALVAALTVCYISDFF. Over 248 to 288 the chain is Cytoplasmic; it reads KARPPQHCLKEEELERKPSLSLTLTLGEADHNHYGYPHSSS.

Belongs to the PA-phosphatase related phosphoesterase family. Forms functional homodimers and homooligomers. Can also form heterooligomers with PLPP1 and PLPP3. Post-translationally, N-glycosylated. In terms of tissue distribution, found mainly in brain, pancreas and placenta.

The protein resides in the membrane. The protein localises to the cell membrane. Its subcellular location is the early endosome membrane. It localises to the endoplasmic reticulum membrane. It carries out the reaction a 1,2-diacyl-sn-glycero-3-phosphate + H2O = a 1,2-diacyl-sn-glycerol + phosphate. The catalysed reaction is 1,2-dihexadecanoyl-sn-glycero-3-phosphate + H2O = 1,2-dihexadecanoyl-sn-glycerol + phosphate. The enzyme catalyses 1,2-di-(9Z-octadecenoyl)-sn-glycero-3-phosphate + H2O = 1,2-di-(9Z-octadecenoyl)-sn-glycerol + phosphate. It catalyses the reaction a monoacyl-sn-glycero-3-phosphate + H2O = a monoacylglycerol + phosphate. It carries out the reaction (9Z)-octadecenoyl-sn-glycero-3-phosphate + H2O = (9Z-octadecenoyl)-glycerol + phosphate. The catalysed reaction is sphing-4-enine 1-phosphate + H2O = sphing-4-enine + phosphate. The enzyme catalyses an N-acylsphing-4-enine 1-phosphate + H2O = an N-acylsphing-4-enine + phosphate. It catalyses the reaction N-(octanoyl)-sphing-4-enine-1-phosphate + H2O = N-octanoylsphing-4-enine + phosphate. It carries out the reaction N-(9Z-octadecenoyl)-ethanolamine phosphate + H2O = N-(9Z-octadecenoyl) ethanolamine + phosphate. It functions in the pathway lipid metabolism; phospholipid metabolism. With respect to regulation, magnesium-independent phospholipid phosphatase. Insensitive to N-ethylmaleimide. Inhibited by sphingosine, zinc ions and modestly by propanolol. Its function is as follows. Magnesium-independent phospholipid phosphatase that catalyzes the dephosphorylation of a variety of glycerolipid and sphingolipid phosphate esters including phosphatidate/PA, lysophosphatidate/LPA, sphingosine 1-phosphate/S1P and ceramide 1-phosphate/C1P. Has no apparent extracellular phosphatase activity and therefore most probably acts intracellularly. Also acts on N-oleoyl ethanolamine phosphate/N-(9Z-octadecenoyl)-ethanolamine phosphate, a potential physiological compound. Through dephosphorylation of these bioactive lipid mediators produces new bioactive compounds and may regulate signal transduction in different cellular processes. Indirectly regulates, for instance, cell cycle G1/S phase transition through its phospholipid phosphatase activity. This chain is Phospholipid phosphatase 2, found in Homo sapiens (Human).